Reading from the N-terminus, the 691-residue chain is Threonine--tRNA ligase (691 aa).

Positions 1-22 (MSVPAQPAPGADGGDPRQPIRV) are disordered. Residues 1–73 (MSVPAQPAPG…DADAEVTPIA (73 aa)) form the TGS domain. The tract at residues 268–574 (DHRKLGVELD…LTEHYAGAFP (307 aa)) is catalytic. Zn(2+)-binding residues include Cys373, His424, and His551.

It belongs to the class-II aminoacyl-tRNA synthetase family. In terms of assembly, homodimer. Zn(2+) serves as cofactor.

It is found in the cytoplasm. The catalysed reaction is tRNA(Thr) + L-threonine + ATP = L-threonyl-tRNA(Thr) + AMP + diphosphate + H(+). In terms of biological role, catalyzes the attachment of threonine to tRNA(Thr) in a two-step reaction: L-threonine is first activated by ATP to form Thr-AMP and then transferred to the acceptor end of tRNA(Thr). Also edits incorrectly charged L-seryl-tRNA(Thr). The polypeptide is Threonine--tRNA ligase (Mycobacterium ulcerans (strain Agy99)).